A 147-amino-acid polypeptide reads, in one-letter code: Hemoglobin subunit beta (147 aa).

The 146-residue stretch at 2–147 (EWTDAERSAI…VVSALCRQYH (146 aa)) folds into the Globin domain. Heme b contacts are provided by His-63 and His-92.

Belongs to the globin family. In terms of assembly, heterotetramer of two alpha chains and two beta chains. Red blood cells.

Involved in oxygen transport from gills to the various peripheral tissues. The polypeptide is Hemoglobin subunit beta (hbb) (Carassius auratus (Goldfish)).